Here is a 310-residue protein sequence, read N- to C-terminus: Vomeronasal type-1 receptor 40 (310 aa).

Residues 1-20 (MNKANMLRTDKDMQIILFSE) are Extracellular-facing. The chain crosses the membrane as a helical span at residues 21–41 (VSVGISANSILFIAHVCMILG). Topologically, residues 42–50 (ENRPKPIDL) are cytoplasmic. The chain crosses the membrane as a helical span at residues 51 to 71 (YIAFLSLTQLMLLITMGLIAV). Over 72-93 (DMFLSQGIWDSTTCQSLIYLHR) the chain is Extracellular. Cys-85 and Cys-172 are oxidised to a cystine. Residues 94–114 (LLRGLSLCATCLLNILWTITL) form a helical membrane-spanning segment. Topologically, residues 115–134 (SSRSFCSTKFKHKSPHHISG) are cytoplasmic. The chain crosses the membrane as a helical span at residues 135-155 (AFIFFCVLYMSFSSHLFISII). The Extracellular portion of the chain corresponds to 156–190 (ATHNLTSENFIYVTQSCSLLPLSYSRTSMFSAPMA). An N-linked (GlcNAc...) asparagine glycan is attached at Asn-159. Residues 191–211 (IREAFLVSLMALSSGYMVALL) form a helical membrane-spanning segment. The Cytoplasmic portion of the chain corresponds to 212–238 (WRHKKQAQHLHSTSLSSKASPEQRATR). The chain crosses the membrane as a helical span at residues 239–259 (TILLLMSFFVVLYILENAVFY). Residues 260 to 268 (SRIKFKDGS) lie on the Extracellular side of the membrane. A helical transmembrane segment spans residues 269–289 (ILYCVQIILCHSYATVNPFVF). Residues 290 to 310 (ICTEKHIIKFWESKCGRIVNI) are Cytoplasmic-facing.

Belongs to the G-protein coupled receptor 1 family.

The protein resides in the cell membrane. Functionally, putative pheromone receptor implicated in the regulation of social and reproductive behavior. The sequence is that of Vomeronasal type-1 receptor 40 (Vmn1r40) from Mus musculus (Mouse).